Here is a 788-residue protein sequence, read N- to C-terminus: Protein translocase subunit SecA 2 (788 aa).

ATP is bound by residues Gln86, Gly104 to Thr108, and Asp493.

This sequence belongs to the SecA family. Monomer and homodimer. Part of the essential Sec protein translocation apparatus which comprises SecA, SecYEG and auxiliary proteins SecDF. Other proteins may also be involved.

It localises to the cell membrane. Its subcellular location is the cytoplasm. It carries out the reaction ATP + H2O + cellular proteinSide 1 = ADP + phosphate + cellular proteinSide 2.. Part of the Sec protein translocase complex. Interacts with the SecYEG preprotein conducting channel. Has a central role in coupling the hydrolysis of ATP to the transfer of proteins into and across the cell membrane, serving as an ATP-driven molecular motor driving the stepwise translocation of polypeptide chains across the membrane. The protein is Protein translocase subunit SecA 2 of Bacillus cereus (strain ZK / E33L).